Consider the following 468-residue polypeptide: MTKTLPKDFIFGGATAAYQAEGATHTDGKGPVAWDKYLEDNYWYTAEPASDFYNRYPVDLKLSEEFGVNGIRISIAWSRIFPTGKGEVNPKGVEYYHNLFAECHKRHVEPFVTLHHFDTPEALHSDGDFLNRENIEHFVNYAEFCFKEFSEVNYWTTFNEIGPIGDGQYLVGKFPPGIQYDLAKVFQSHHNMMVSHARAVKLFKDGGYSGEIGVVHALPTKYPFDANNPDDVRAAELEDIIHNKFILDATYLGKYSDKTMEGVNHILEVNGGELDLCEEDFAALDAAKDLNDFLGINYYMSDWMQAFDGETEIIHNGKGEKGSSKYQIKGVGRRKAPVDVPKTDWDWILFPQGLYDQIMRVKADYPNYKKIYITENGLGYKDEFVDNTVYDDGRIDYVKKHLEVISDAISDGVNVKGYFMWSLMDVFSWSNGYEKRYGLFYVDFETQERYPKKSAYWYKKVAETQVIE.

D-galactose 6-phosphate is bound by residues glutamine 19, histidine 116, asparagine 159, glutamate 160, and asparagine 297. Glutamate 160 (proton donor) is an active-site residue. The active-site Nucleophile is glutamate 375. Residues serine 428, tryptophan 429, lysine 435, and tyrosine 437 each coordinate D-galactose 6-phosphate.

This sequence belongs to the glycosyl hydrolase 1 family.

It catalyses the reaction a 6-phospho-beta-D-galactoside + H2O = D-galactose 6-phosphate + an alcohol. It participates in carbohydrate metabolism; lactose degradation; D-galactose 6-phosphate and beta-D-glucose from lactose 6-phosphate: step 1/1. The polypeptide is 6-phospho-beta-galactosidase (Streptococcus pyogenes serotype M2 (strain MGAS10270)).